The following is a 102-amino-acid chain: Integration host factor subunit alpha (102 aa).

Residues 49-70 (FGNFQLRTKPQRPGRNPKTGEE) are disordered.

Belongs to the bacterial histone-like protein family. Heterodimer of an alpha and a beta chain.

Its function is as follows. This protein is one of the two subunits of integration host factor, a specific DNA-binding protein that functions in genetic recombination as well as in transcriptional and translational control. In Nitrosomonas europaea (strain ATCC 19718 / CIP 103999 / KCTC 2705 / NBRC 14298), this protein is Integration host factor subunit alpha.